Reading from the N-terminus, the 137-residue chain is Transcription antitermination protein NusB (137 aa).

The protein belongs to the NusB family.

Its function is as follows. Involved in transcription antitermination. Required for transcription of ribosomal RNA (rRNA) genes. Binds specifically to the boxA antiterminator sequence of the ribosomal RNA (rrn) operons. This is Transcription antitermination protein NusB from Proteus mirabilis (strain HI4320).